A 708-amino-acid polypeptide reads, in one-letter code: ATP-dependent RNA helicase laf-1 (708 aa).

Over residues methionine 1 to arginine 21 the composition is skewed to low complexity. A disordered region spans residues methionine 1–glycine 191. Residues glycine 48–aspartate 70 are compositionally biased toward gly residues. Composition is skewed to basic and acidic residues over residues glycine 72 to arginine 83 and glycine 90 to glycine 99. Gly residues predominate over residues tyrosine 100–tyrosine 123. The short motif at serine 231–lysine 259 is the Q motif element. In terms of domain architecture, Helicase ATP-binding spans isoleucine 262–phenylalanine 453. Alanine 275–threonine 282 lines the ATP pocket. Positions aspartate 397–aspartate 400 match the DEAD box motif. One can recognise a Helicase C-terminal domain in the interval asparagine 465 to serine 626. A disordered region spans residues glutamate 623–serine 708. Gly residues-rich tracts occupy residues arginine 630–phenylalanine 647 and glycine 656–arginine 692. The segment covering arginine 699–serine 708 has biased composition (polar residues).

This sequence belongs to the DEAD box helicase family. DDX3/DED1 subfamily. Binds RNA as a monomer at low laf-1 concentrations and as a dimer at high laf-1 concentrations. As to expression, expressed in the germline and soma of young adult hermaphrodites.

It localises to the cytoplasm. Its subcellular location is the cytoplasmic granule. It is found in the nucleus. The protein resides in the stress granule. The protein localises to the inflammasome. It localises to the cell membrane. Its subcellular location is the cell projection. It is found in the lamellipodium. It catalyses the reaction ATP + H2O = ADP + phosphate + H(+). Multifunctional ATP-dependent RNA helicase. Plays a role in RNA remodeling, but is not required for RNA unwinding. Binds to RNA in a concentration-dependent manner to stimulate annealing between two complementary strands of RNA. This process is also dependent upon ATP; ATP reduces binding to RNA and subsequently diminishes RNA annealing. Involved in many cellular processes, which do not necessarily require its ATPase/helicase catalytic activities. Involved in the regulation of transcription and translation initiation. Involved in innate immunity. Involved in both stress and inflammatory responses. Promotes liquid-liquid phase separation of P granules, which is a process important for intracellular organization and stress granule assembly. Required for embryonic development. Plays a role in sexual cell fate determination by negatively regulating the translation of the sex determining protein tra-2. May play a protective role in the response to heat and oxidative stress. May negatively regulate extrinsic apoptotic signaling pathway via death domain receptors. May be involved in mitotic chromosome segregation. This is ATP-dependent RNA helicase laf-1 from Caenorhabditis elegans.